Here is a 186-residue protein sequence, read N- to C-terminus: Small ribosomal subunit protein uS4 (186 aa).

The 65-residue stretch at 106-170 (RRLQTIVYRK…SPLKDEDHPI (65 aa)) folds into the S4 RNA-binding domain. Positions 151–186 (EEEEVDYSPYSPLKDEDHPIRCEARGESPEETAAEE) are disordered. Basic and acidic residues predominate over residues 163-178 (LKDEDHPIRCEARGES).

It belongs to the universal ribosomal protein uS4 family. In terms of assembly, part of the 30S ribosomal subunit. Contacts protein S5. The interaction surface between S4 and S5 is involved in control of translational fidelity.

Functionally, one of the primary rRNA binding proteins, it binds directly to 16S rRNA where it nucleates assembly of the body of the 30S subunit. Its function is as follows. With S5 and S12 plays an important role in translational accuracy. The sequence is that of Small ribosomal subunit protein uS4 from Methanopyrus kandleri (strain AV19 / DSM 6324 / JCM 9639 / NBRC 100938).